Reading from the N-terminus, the 626-residue chain is Polyphenol oxidase C, chloroplastic (626 aa).

The transit peptide at 1-83 directs the protein to the chloroplast; the sequence is MASLCSNSST…ANAIPLAASA (83 aa). 2 cysteine pairs are disulfide-bonded: Cys94/Cys110 and Cys109/Cys177. The Cu cation site is built by His176, His194, His203, His324, His328, and His366. Positions 180–194 form a cross-link, 2'-(S-cysteinyl)-histidine (Cys-His); it reads CNGGYSIDGKVLQVH.

Belongs to the tyrosinase family. Cu(2+) is required as a cofactor.

Its subcellular location is the plastid. The protein resides in the chloroplast thylakoid lumen. It catalyses the reaction 2 catechol + O2 = 2 1,2-benzoquinone + 2 H2O. Its function is as follows. Catalyzes the oxidation of mono- and o-diphenols to o-diquinones. This is Polyphenol oxidase C, chloroplastic from Solanum lycopersicum (Tomato).